A 97-amino-acid polypeptide reads, in one-letter code: Large ribosomal subunit protein uL23 (97 aa).

Belongs to the universal ribosomal protein uL23 family. Part of the 50S ribosomal subunit. Contacts protein L29, and trigger factor when it is bound to the ribosome.

One of the early assembly proteins it binds 23S rRNA. One of the proteins that surrounds the polypeptide exit tunnel on the outside of the ribosome. Forms the main docking site for trigger factor binding to the ribosome. In Chelativorans sp. (strain BNC1), this protein is Large ribosomal subunit protein uL23.